Consider the following 854-residue polypeptide: Probable inorganic carbon transporter subunit DabA (854 aa).

Positions 378, 380, 560, and 575 each coordinate Zn(2+).

Belongs to the inorganic carbon transporter (TC 9.A.2) DabA family. In terms of assembly, forms a complex with DabB. The cofactor is Zn(2+).

It localises to the cell membrane. Its function is as follows. Part of an energy-coupled inorganic carbon pump. This Bacillus cereus (strain ATCC 14579 / DSM 31 / CCUG 7414 / JCM 2152 / NBRC 15305 / NCIMB 9373 / NCTC 2599 / NRRL B-3711) protein is Probable inorganic carbon transporter subunit DabA.